The chain runs to 72 residues: UPF0270 protein YheU (72 aa).

This sequence belongs to the UPF0270 family.

The protein is UPF0270 protein YheU of Escherichia coli (strain UTI89 / UPEC).